We begin with the raw amino-acid sequence, 328 residues long: 4-hydroxy-2-oxoglutarate aldolase, mitochondrial (328 aa).

The transit peptide at 1–26 (MFGRTLFPARVIALGSGLFRTPLRTL) directs the protein to the mitochondrion. Position 76-77 (76-77 (SN)) interacts with substrate. Lys195 (schiff-base intermediate with substrate) is an active-site residue. Residues Ser197 and Gly221 each coordinate substrate.

It belongs to the DapA family. In terms of assembly, homotetramer.

It localises to the mitochondrion. It catalyses the reaction (4S)-4-hydroxy-2-oxoglutarate = glyoxylate + pyruvate. It carries out the reaction (4R)-4-hydroxy-2-oxoglutarate = glyoxylate + pyruvate. Its activity is regulated as follows. Inhibited by divalent cations. In terms of biological role, catalyzes the final step in the metabolic pathway of hydroxyproline. The protein is 4-hydroxy-2-oxoglutarate aldolase, mitochondrial (hoga1) of Xenopus tropicalis (Western clawed frog).